The sequence spans 424 residues: Na(+), Li(+), K(+)/H(+) antiporter (424 aa).

Transmembrane regions (helical) follow at residues 15-35, 42-62, 74-94, 105-125, 141-161, 165-185, 227-247, 274-294, 305-325, 327-347, 367-389, and 393-415; these read VGEFFMNTSFWMVFPFLAIYF, GLAGMLLIISQIFSVAANLFG, MLVSAAVAQGFAFLLFALANS, VAFTLAGMCGSLYWPASQAMI, FYTTLNIAVVIGPLFGAVLFF, FELLLTVAIISVLLGLLLRFY, LLFVIAGILGAQTFMQLDLVI, TSFGILLAENGLIVALLTVVI, WVFFFSALLFGLSMAIFPMTS, FWIFFVAMAVFTFAELMVVGL, AASLRYTIGRMIAPISIPMTAWF, and WTFIILGSFAVLSGFVYLWMFHL.

Belongs to the major facilitator superfamily.

It localises to the cell membrane. Norfloxacin transport is inhibited by CCCP. Functionally, exhibits dual functions as a Na(+)(Li(+)/K(+))/H(+) antiporter and a multidrug efflux pump. Catalyzes the efflux of Na(+), Li(+) and K(+) in exchange for external protons. Shows a preference for Na(+), followed by K(+) and Li(+). Can also function as a multidrug efflux pump. Transports ethidium bromide and norfloxacin. The chain is Na(+), Li(+), K(+)/H(+) antiporter from Planococcus maritimus.